A 166-amino-acid polypeptide reads, in one-letter code: MAIKLEDKKAIVAEVNEAAKAGLSAVVADARGVTVGAMTGLRKEAREAGVYVRVVRNTLLKRAVADTEFSVLNDVFTGPTLIAFSNEHPGAAARLFKEFAKGQDKFEIKAAAFEGKFLAANQIDVLATLPTRNEAISQLMSVIQGATSKLARTLAAVRDQKEAAAA.

The protein belongs to the universal ribosomal protein uL10 family. Part of the ribosomal stalk of the 50S ribosomal subunit. The N-terminus interacts with L11 and the large rRNA to form the base of the stalk. The C-terminus forms an elongated spine to which L12 dimers bind in a sequential fashion forming a multimeric L10(L12)X complex.

Functionally, forms part of the ribosomal stalk, playing a central role in the interaction of the ribosome with GTP-bound translation factors. In Pseudomonas syringae pv. tomato (strain ATCC BAA-871 / DC3000), this protein is Large ribosomal subunit protein uL10.